The following is a 90-amino-acid chain: Protein S100-A6 (90 aa).

EF-hand domains are found at residues 12–47 and 48–83; these read LVAI…IGSK and LQDA…LALI. 2 residues coordinate Ca(2+): threonine 28 and glutamate 33. The residue at position 40 (lysine 40) is an N6-acetyllysine. At serine 46 the chain carries Phosphoserine. Residue lysine 47 is modified to N6-acetyllysine; alternate. Lysine 47 carries the N6-succinyllysine; alternate modification. Ca(2+)-binding residues include aspartate 61, asparagine 63, aspartate 65, glutamate 67, and glutamate 72.

It belongs to the S-100 family. Homodimer; head to tail assembly of 2 subunits. Interacts with CACYBP in a calcium-dependent manner. Interacts with ANXA2 and ANXA11 (via N-terminus). Interacts with SUGT1. Interacts with TP53; has higher affinity for TP53 that is phosphorylated on its N-terminal domain, and lower affinity for TP53 that is phosphorylated on its C-terminal domain. Interacts with tropomyosin. Interacts with FKBP4. Interacts with PPP5C (via TPR repeats); the interaction is calcium-dependent and modulates PPP5C activity. Interacts with TPPP; this interaction inhibits TPPP dimerization. Post-translationally, the N-terminus is blocked.

It is found in the nucleus envelope. The protein localises to the cytoplasm. It localises to the cell membrane. In terms of biological role, may function as calcium sensor and modulator, contributing to cellular calcium signaling. May function by interacting with other proteins, such as TPR-containing proteins, and indirectly play a role in many physiological processes such as the reorganization of the actin cytoskeleton and in cell motility. Binds 2 calcium ions. Calcium binding is cooperative. This is Protein S100-A6 (S100A6) from Homo sapiens (Human).